The primary structure comprises 443 residues: Eukaryotic translation initiation factor 3 subunit E (443 aa).

The PCI domain occupies Leu249–Ser417.

This sequence belongs to the eIF-3 subunit E family. In terms of assembly, component of the eukaryotic translation initiation factor 3 (eIF-3) complex.

It is found in the cytoplasm. Its function is as follows. Component of the eukaryotic translation initiation factor 3 (eIF-3) complex, which is involved in protein synthesis of a specialized repertoire of mRNAs and, together with other initiation factors, stimulates binding of mRNA and methionyl-tRNAi to the 40S ribosome. The eIF-3 complex specifically targets and initiates translation of a subset of mRNAs involved in cell proliferation. The polypeptide is Eukaryotic translation initiation factor 3 subunit E (int-6) (Neurospora crassa (strain ATCC 24698 / 74-OR23-1A / CBS 708.71 / DSM 1257 / FGSC 987)).